The following is a 117-amino-acid chain: UPF0145 protein PH1682 (117 aa).

This sequence belongs to the UPF0145 family.

The protein is UPF0145 protein PH1682 of Pyrococcus horikoshii (strain ATCC 700860 / DSM 12428 / JCM 9974 / NBRC 100139 / OT-3).